A 498-amino-acid polypeptide reads, in one-letter code: Probable FAD-binding monooxygenase AlmA (498 aa).

A helical membrane pass occupies residues 4–24 (HIDILIVGAGISGIGIAAHLS). FAD contacts are provided by serine 15, glutamate 36, aspartate 56, phenylalanine 62, and valine 104. NADP(+) is bound at residue 54–56 (RSD). NADP(+) is bound by residues 184–190 (SGATAIT), 208–209 (RS), and 292–293 (RL). Valine 395 serves as a coordination point for FAD.

This sequence belongs to the FAD-binding monooxygenase family. FAD serves as cofactor.

It localises to the cell membrane. It functions in the pathway hydrocarbon metabolism; alkane degradation. Its function is as follows. Is able to catalyze the degradation of n-alkanes with C chain lengths of 32 and 36. Probably allows Acinetobacter baylyi strain ADP1 to grow on the long-chain n-alkane dotriacontane (C32H66) as a sole carbon source. The sequence is that of Probable FAD-binding monooxygenase AlmA from Acinetobacter baylyi (strain ATCC 33305 / BD413 / ADP1).